A 108-amino-acid chain; its full sequence is Ferredoxin, plant-type (108 aa).

The 92-residue stretch at 5–96 folds into the 2Fe-2S ferredoxin-type domain; sequence FEITVQPGGE…DLCIERYSKP (92 aa). [2Fe-2S] cluster is bound by residues C40, C45, C48, and C80.

The protein belongs to the 2Fe2S plant-type ferredoxin family.

Its pathway is aromatic compound metabolism; catechol degradation. In terms of biological role, ferredoxins are iron-sulfur proteins that transfer electrons in a wide variety of metabolic reactions. The sequence is that of Ferredoxin, plant-type (nahT) from Pseudomonas putida (Arthrobacter siderocapsulatus).